Consider the following 485-residue polypeptide: Glucagon receptor (485 aa).

The signal sequence occupies residues 1–26; the sequence is MPLTQLHCPHLLLLLLVLSCLPEAPS. Residues 27–137 lie on the Extracellular side of the membrane; the sequence is AQVMDFLFEK…EIEVQKGVAK (111 aa). 3 cysteine pairs are disulfide-bonded: Cys-44/Cys-68, Cys-59/Cys-101, and Cys-82/Cys-122. N-linked (GlcNAc...) asparagine glycans are attached at residues Asn-47, Asn-60, Asn-75, Asn-79, and Asn-118. The chain crosses the membrane as a helical span at residues 138-162; sequence MYSSQQVMYTVGYSLSLGALLLALV. Residues 163-174 lie on the Cytoplasmic side of the membrane; the sequence is ILLGLRKLHCTR. Residues 175–199 traverse the membrane as a helical segment; it reads NYIHGNLFASFVLKAGSVLVIDWLL. Residues 200 to 226 lie on the Extracellular side of the membrane; the sequence is KTRYSQKIGDDLSVSVWLSDGAMAGCR. Cysteines 225 and 295 form a disulfide. Residues 227 to 250 form a helical membrane-spanning segment; that stretch reads VATVIMQYGIIANYCWLLVEGVYL. Topologically, residues 251 to 264 are cytoplasmic; that stretch reads YSLLSLATFSERSF. The chain crosses the membrane as a helical span at residues 265–286; the sequence is FSLYLGIGWGAPLLFVIPWVVV. The Extracellular segment spans residues 287-304; the sequence is KCLFENVQCWTSNDNMGF. Residues 305 to 327 traverse the membrane as a helical segment; that stretch reads WWILRIPVFLALLINFFIFVHII. Topologically, residues 328 to 351 are cytoplasmic; that stretch reads HLLVAKLRAHQMHYADYKFRLARS. The segment at 351-354 is important for allosteric inhibitor binding; that stretch reads STLT. The helical transmembrane segment at 352–370 threads the bilayer; the sequence is TLTLIPLLGVHEVVFAFVT. Residues 371 to 382 lie on the Extracellular side of the membrane; that stretch reads DEHAQGTLRSTK. A helical membrane pass occupies residues 383-403; it reads LFFDLFLSSFQGLLVAVLYCF. Over 404–485 the chain is Cytoplasmic; sequence LNKEVQAELM…SLPRLADSPT (82 aa). Positions 457–475 are enriched in polar residues; that stretch reads AGSSSGTGCVPSMETSLAS. The segment at 457-485 is disordered; it reads AGSSSGTGCVPSMETSLASSLPRLADSPT. Ser-460 and Ser-476 each carry phosphoserine.

This sequence belongs to the G-protein coupled receptor 2 family. In terms of processing, ligand-binding promotes phosphorylation of serine residues in the C-terminal cytoplasmic domain. Phosphorylation is important for receptor endocytosis after ligand-binding. In terms of tissue distribution, expressed predominantly in liver, kidney, adrenal, lung and stomach, while lower levels of expression are detected in brown and white adipose tissue, cerebellum, duodenum and heart.

It localises to the cell membrane. Its function is as follows. G-protein coupled receptor for glucagon that plays a central role in the regulation of blood glucose levels and glucose homeostasis. Regulates the rate of hepatic glucose production by promoting glycogen hydrolysis and gluconeogenesis. Plays an important role in mediating the responses to fasting. Ligand binding causes a conformation change that triggers signaling via guanine nucleotide-binding proteins (G proteins) and modulates the activity of down-stream effectors, such as adenylate cyclase. Promotes activation of adenylate cyclase. Besides, plays a role in signaling via a phosphatidylinositol-calcium second messenger system. This Mus musculus (Mouse) protein is Glucagon receptor (Gcgr).